The following is an 80-amino-acid chain: MATRNLVASLLCIMYAVHAMNDYLYIVKHVKVCNHDYENYCLNNGTCFTIALDNVSITPFCVCRINYEGSRCQFINLVTY.

Residues 1-19 (MATRNLVASLLCIMYAVHA) form the signal peptide. An EGF-like domain is found at 29–73 (HVKVCNHDYENYCLNNGTCFTIALDNVSITPFCVCRINYEGSRCQ). 3 disulfides stabilise this stretch: Cys-33-Cys-47, Cys-41-Cys-61, and Cys-63-Cys-72. 2 N-linked (GlcNAc...) asparagine; by host glycosylation sites follow: Asn-44 and Asn-54.

It localises to the secreted. This Oryctolagus cuniculus (Rabbit) protein is Growth factor.